Consider the following 779-residue polypeptide: Cysteine-rich protein 2-binding protein (779 aa).

The segment at 1-34 is disordered; sequence MDSSIHLSGLLSRHDDDATRTSTSEGLEEGEVEG. The residue at position 4 (Ser-4) is a Phosphoserine. Lys-230 carries the post-translational modification N6-acetyllysine. Disordered regions lie at residues 247 to 292, 314 to 345, and 360 to 457; these read SRNP…PVKF, LSSS…HSAT, and PPQA…GPRY. Basic and acidic residues predominate over residues 255–275; sequence MELKEKRSRTQEAKDIRRAQK. Residue Ser-284 is modified to Phosphoserine. Lys-291 carries the post-translational modification N6-acetyllysine. Residues 314 to 334 show a composition bias toward low complexity; it reads LSSSDRTPLTSPSPSPSLDFS. Composition is skewed to basic and acidic residues over residues 402-423 and 443-452; these read RAPE…RMDG and KPPLEKDMKP. Ser-413 is subject to Phosphoserine. Positions 635-779 constitute an N-acetyltransferase domain; it reads LDYCYVRPNH…KHAFFLRLRR (145 aa).

In terms of assembly, interacts with the LIM 1 domain of CSRP2. Component of the ADA2A-containing complex (ATAC), composed of CSRP2BP, KAT2A, TADA2L, TADA3L, ZZ3, MBIP, WDR5, YEATS2, CCDC101 and DR1. In the complex, it probably interacts directly with KAT2A, MBIP and WDR5.

The protein resides in the nucleus. It is found in the cytoplasm. In terms of biological role, component of the ATAC complex, a complex with histone acetyltransferase activity on histones H3 and H4. May function as a scaffold for the ATAC complex to promote ATAC complex stability. Has also weak histone acetyltransferase activity toward histone H4. Required for the normal progression through G1 and G2/M phases of the cell cycle. The sequence is that of Cysteine-rich protein 2-binding protein from Mus musculus (Mouse).